We begin with the raw amino-acid sequence, 908 residues long: Protein translocase subunit SecA (908 aa).

ATP-binding positions include Gln87, 105–109, and Asp512; that span reads GEGKT. The tract at residues 860-908 is disordered; the sequence is AESLVGSSDEHEAVTAQAPMIRDGEKVGRNDPCPCGSGRKYKQCHGKLS. Positions 892, 894, 903, and 904 each coordinate Zn(2+). Residues 898-908 are compositionally biased toward basic residues; that stretch reads RKYKQCHGKLS.

Belongs to the SecA family. As to quaternary structure, monomer and homodimer. Part of the essential Sec protein translocation apparatus which comprises SecA, SecYEG and auxiliary proteins SecDF-YajC and YidC. It depends on Zn(2+) as a cofactor.

It localises to the cell inner membrane. The protein localises to the cytoplasm. It carries out the reaction ATP + H2O + cellular proteinSide 1 = ADP + phosphate + cellular proteinSide 2.. Part of the Sec protein translocase complex. Interacts with the SecYEG preprotein conducting channel. Has a central role in coupling the hydrolysis of ATP to the transfer of proteins into and across the cell membrane, serving both as a receptor for the preprotein-SecB complex and as an ATP-driven molecular motor driving the stepwise translocation of polypeptide chains across the membrane. The sequence is that of Protein translocase subunit SecA from Shewanella baltica (strain OS155 / ATCC BAA-1091).